Consider the following 359-residue polypeptide: Glutamine synthetase (359 aa).

Positions 28 to 107 (VMAEYIWIDG…VLAACYTADG (80 aa)) constitute a GS beta-grasp domain. A GS catalytic domain is found at 114 to 359 (HRDACAKLLE…GIITETMFEH (246 aa)). A Phosphoserine modification is found at serine 273. Threonine 303 bears the Phosphothreonine mark. The residue at position 305 (serine 305) is a Phosphoserine.

The protein belongs to the glutamine synthetase family. In terms of assembly, homooctamer.

The protein localises to the cytoplasm. The catalysed reaction is L-glutamate + NH4(+) + ATP = L-glutamine + ADP + phosphate + H(+). This chain is Glutamine synthetase (gln1), found in Schizosaccharomyces pombe (strain 972 / ATCC 24843) (Fission yeast).